A 476-amino-acid chain; its full sequence is Elongation factor Tu, chloroplastic (476 aa).

The transit peptide at 1 to 67 (MAISAPAACS…QSTRRSFTVR (67 aa)) directs the protein to the chloroplast. The tr-type G domain occupies 77 to 281 (KPHVNIGTIG…AVDDYIPIPQ (205 aa)). The interval 86 to 93 (GHVDHGKT) is G1. Position 86-93 (86-93 (GHVDHGKT)) interacts with GTP. T94 is subject to Phosphothreonine. Residues 127–131 (GITIN) form a G2 region. The tract at residues 148–151 (DCPG) is G3. GTP is bound by residues 148–152 (DCPGH) and 203–206 (NKED). A G4 region spans residues 203–206 (NKED). The interval 241-243 (SAL) is G5.

It belongs to the TRAFAC class translation factor GTPase superfamily. Classic translation factor GTPase family. EF-Tu/EF-1A subfamily. As to quaternary structure, interacts with PI5K2. Interacts with APD2.

It localises to the plastid. It is found in the chloroplast. This protein promotes the GTP-dependent binding of aminoacyl-tRNA to the A-site of ribosomes during protein biosynthesis. In Arabidopsis thaliana (Mouse-ear cress), this protein is Elongation factor Tu, chloroplastic (TUFA).